A 1439-amino-acid chain; its full sequence is DNA-directed RNA polymerase subunit beta' (1439 aa).

Residues C70, C72, C85, and C88 each coordinate Zn(2+). 3 residues coordinate Mg(2+): D504, D506, and D508. Zn(2+)-binding residues include C862, C936, C943, and C946.

The protein belongs to the RNA polymerase beta' chain family. As to quaternary structure, the RNAP catalytic core consists of 2 alpha, 1 beta, 1 beta' and 1 omega subunit. When a sigma factor is associated with the core the holoenzyme is formed, which can initiate transcription. It depends on Mg(2+) as a cofactor. Requires Zn(2+) as cofactor.

The catalysed reaction is RNA(n) + a ribonucleoside 5'-triphosphate = RNA(n+1) + diphosphate. DNA-dependent RNA polymerase catalyzes the transcription of DNA into RNA using the four ribonucleoside triphosphates as substrates. The polypeptide is DNA-directed RNA polymerase subunit beta' (Gluconobacter oxydans (strain 621H) (Gluconobacter suboxydans)).